Consider the following 487-residue polypeptide: N-succinylglutamate 5-semialdehyde dehydrogenase (487 aa).

Residue 221-226 (GSSRTG) participates in NAD(+) binding. Catalysis depends on residues Glu244 and Cys278.

The protein belongs to the aldehyde dehydrogenase family. AstD subfamily.

The catalysed reaction is N-succinyl-L-glutamate 5-semialdehyde + NAD(+) + H2O = N-succinyl-L-glutamate + NADH + 2 H(+). The protein operates within amino-acid degradation; L-arginine degradation via AST pathway; L-glutamate and succinate from L-arginine: step 4/5. Functionally, catalyzes the NAD-dependent reduction of succinylglutamate semialdehyde into succinylglutamate. This Pseudomonas putida (strain ATCC 47054 / DSM 6125 / CFBP 8728 / NCIMB 11950 / KT2440) protein is N-succinylglutamate 5-semialdehyde dehydrogenase.